The chain runs to 340 residues: PI-PLC X domain-containing protein 2 (340 aa).

Positions histidine 42–cysteine 215 constitute a PI-PLC X-box domain. Active-site residues include histidine 57 and histidine 132.

Expressed at highest levels in brain, followed by stomach and small intestine. Detected at low levels in kidney, ey, thymus and slkeletal muscle.

The protein localises to the nucleus. The enzyme catalyses a 1,2-diacyl-sn-glycero-3-phospho-(1D-myo-inositol) + H2O = 1D-myo-inositol 1-phosphate + a 1,2-diacyl-sn-glycerol + H(+). In terms of biological role, catalyzes the hydrolysis of inositol from phosphatidylinositol (1,2-diacyl-sn-glycero-3-phospho-(1D-myo-inositol), PI). Could also hydrolyze various multi-phosphorylated derivatives of PI, such as phosphatidylinositol-4,5 bisphosphate (PIP2), releasing inositol-1,4,5-trisphosphate (IP3) and the protein kinase C activator diacylglycerol (DAG), therefore mediating cell signaling. This chain is PI-PLC X domain-containing protein 2 (Plcxd2), found in Mus musculus (Mouse).